Reading from the N-terminus, the 1035-residue chain is DNA polymerase I B, mitochondrial (1035 aa).

The N-terminal 42 residues, 1 to 42 (MAVAPPLPPAPARLLRRWQGSSPWLSSSFGRTRYFSRPAFAA), are a transit peptide targeting the mitochondrion. The interval 100-124 (TNGTTPLRVGNLRHDPSEDIRSSNY) is disordered. The segment covering 111 to 120 (LRHDPSEDIR) has biased composition (basic and acidic residues). Positions 317-478 (FGNGKTCIWV…LYESLKNKLE (162 aa)) constitute a 3'-5' exonuclease domain. The segment at 699 to 1032 (HAIAALCEVF…VDAKYAKSWY (334 aa)) is polymerase.

The protein belongs to the DNA polymerase type-A family.

It is found in the mitochondrion. It catalyses the reaction DNA(n) + a 2'-deoxyribonucleoside 5'-triphosphate = DNA(n+1) + diphosphate. Its activity is regulated as follows. Not inhibited by aphidicolin. In terms of biological role, in addition to polymerase activity, this DNA polymerase exhibits 5'-3' exonuclease activity. May be required for DNA replication and accumulation in mitochondria. This Oryza sativa subsp. japonica (Rice) protein is DNA polymerase I B, mitochondrial.